The primary structure comprises 201 residues: ADP-ribosylation factor-related protein 1 (201 aa).

M1 is modified (N-acetylmethionine). GTP is bound by residues 24 to 31 (GLDNAGKT), 75 to 79 (DLGGQ), and 134 to 137 (NKQD).

The protein belongs to the small GTPase superfamily. Arf family. Interacts with SYS1.

The protein resides in the golgi apparatus. It is found in the trans-Golgi network. Its function is as follows. Trans-Golgi-associated GTPase that regulates protein sorting. Controls the targeting of ARL1 and its effector to the trans-Golgi. Required for the lipidation of chylomicrons in the intestine and required for VLDL lipidation in the liver. The sequence is that of ADP-ribosylation factor-related protein 1 (Arfrp1) from Mus musculus (Mouse).